Reading from the N-terminus, the 175-residue chain is Dof zinc finger protein DOF1.5 (175 aa).

The tract at residues glutamate 29–arginine 57 is disordered. The span at proline 37 to leucine 52 shows a compositional bias: polar residues. The Dof-type zinc-finger motif lies at isoleucine 62–proline 116. Zn(2+) is bound by residues cysteine 64, cysteine 67, cysteine 89, and cysteine 92. Positions proline 162 to cysteine 168 match the Nuclear localization signal motif.

It localises to the nucleus. Functionally, transcription factor that binds specifically to a 5'-AA[AG]G-3' consensus core sequence. Acts as a negative regulator in the phytochrome-mediated light responses. Controls phyB-mediated end-of-day response and the phyA-mediated anthocyanin accumulation. Not involved in direct flowering time regulation. This chain is Dof zinc finger protein DOF1.5 (DOF1.5), found in Arabidopsis thaliana (Mouse-ear cress).